A 33-amino-acid chain; its full sequence is Cytochrome b6-f complex subunit 8 (33 aa).

The chain crosses the membrane as a helical span at residues 2-22 (LISLGWAALAATFTFSIAMVV).

This sequence belongs to the PetN family. As to quaternary structure, the 4 large subunits of the cytochrome b6-f complex are cytochrome b6, subunit IV (17 kDa polypeptide, PetD), cytochrome f and the Rieske protein, while the 4 small subunits are PetG, PetL, PetM and PetN. The complex functions as a dimer.

The protein localises to the cellular thylakoid membrane. Functionally, component of the cytochrome b6-f complex, which mediates electron transfer between photosystem II (PSII) and photosystem I (PSI), cyclic electron flow around PSI, and state transitions. The chain is Cytochrome b6-f complex subunit 8 from Synechococcus sp. (strain RCC307).